The primary structure comprises 186 residues: Protein GrpE (186 aa).

Positions 1-22 are enriched in basic and acidic residues; that stretch reads MSDSNKEKKKKFADMVSKRKGD. Positions 1–35 are disordered; the sequence is MSDSNKEKKKKFADMVSKRKGDDQEDQQTGDLSEE. The span at 23–34 shows a compositional bias: acidic residues; it reads DQEDQQTGDLSE.

The protein belongs to the GrpE family. As to quaternary structure, homodimer.

It is found in the cytoplasm. Functionally, participates actively in the response to hyperosmotic and heat shock by preventing the aggregation of stress-denatured proteins, in association with DnaK and GrpE. It is the nucleotide exchange factor for DnaK and may function as a thermosensor. Unfolded proteins bind initially to DnaJ; upon interaction with the DnaJ-bound protein, DnaK hydrolyzes its bound ATP, resulting in the formation of a stable complex. GrpE releases ADP from DnaK; ATP binding to DnaK triggers the release of the substrate protein, thus completing the reaction cycle. Several rounds of ATP-dependent interactions between DnaJ, DnaK and GrpE are required for fully efficient folding. In Wolbachia pipientis subsp. Culex pipiens (strain wPip), this protein is Protein GrpE.